The sequence spans 123 residues: Immunoglobulin lambda variable 5-45 (123 aa).

The N-terminal stretch at 1 to 19 is a signal peptide; the sequence is MAWTPLLLLFLSHCTGSLS. The segment at 20–44 is framework-1; that stretch reads QAVLTQPSSLSASPGASASLTCTLC. Residues 20–123 enclose the Ig-like domain; that stretch reads QAVLTQPSSL…YCMIWHSSAS (104 aa). C41 and C115 are oxidised to a cystine. A complementarity-determining-1 region spans residues 45–53; it reads SGINVGTYR. Residues 54–70 are framework-2; sequence IYWYQQKPGSPPQYLLR. The tract at residues 68–92 is disordered; it reads LLRYKSDSDKQQGSGVPSRFSGSKD. The tract at residues 71–77 is complementarity-determining-2; the sequence is YKSDSDK. Over residues 78 to 92 the composition is skewed to polar residues; that stretch reads QQGSGVPSRFSGSKD. Residues 78–115 form a framework-3 region; that stretch reads QQGSGVPSRFSGSKDASANAGILLISGLQSEDEADYYC. A complementarity-determining-3 region spans residues 116–123; it reads MIWHSSAS.

In terms of assembly, immunoglobulins are composed of two identical heavy chains and two identical light chains; disulfide-linked.

Its subcellular location is the secreted. The protein resides in the cell membrane. Functionally, v region of the variable domain of immunoglobulin light chains that participates in the antigen recognition. Immunoglobulins, also known as antibodies, are membrane-bound or secreted glycoproteins produced by B lymphocytes. In the recognition phase of humoral immunity, the membrane-bound immunoglobulins serve as receptors which, upon binding of a specific antigen, trigger the clonal expansion and differentiation of B lymphocytes into immunoglobulins-secreting plasma cells. Secreted immunoglobulins mediate the effector phase of humoral immunity, which results in the elimination of bound antigens. The antigen binding site is formed by the variable domain of one heavy chain, together with that of its associated light chain. Thus, each immunoglobulin has two antigen binding sites with remarkable affinity for a particular antigen. The variable domains are assembled by a process called V-(D)-J rearrangement and can then be subjected to somatic hypermutations which, after exposure to antigen and selection, allow affinity maturation for a particular antigen. This chain is Immunoglobulin lambda variable 5-45, found in Homo sapiens (Human).